An 84-amino-acid polypeptide reads, in one-letter code: Kunitz/BPTI-like toxin (84 aa).

Residues 1 to 24 (MSSGGLLLLLGLLTLWAELTPVSG) form the signal peptide. Q25 bears the Pyrrolidone carboxylic acid mark. A BPTI/Kunitz inhibitor domain is found at 31-81 (CHLPANPGPCRATITRFYYNSDSKQCEKFTYGGCHGNENNFETKDKCHYTC). Cystine bridges form between C31–C81, C40–C64, and C56–C77.

The protein resides in the secreted. Functionally, serine protease inhibitor. In Austrelaps superbus (Lowland copperhead snake), this protein is Kunitz/BPTI-like toxin.